The chain runs to 142 residues: MSGSVNQNTDQHSQDSSSTPNNKLTKTLASLDDSTLEFAVDVLSHLPLIRRSLNYAKNLLVRLFVMYMIVQVSYYIVPFVLLVLFGYNQSTPDMKFAIQLQVLVVSRGIIDGIIGVLQFIFWFWIFVDLIRFLFGYAKNKVN.

The disordered stretch occupies residues 1–22 (MSGSVNQNTDQHSQDSSSTPNN). The next 2 helical transmembrane spans lie at 63 to 83 (LFVM…VLLV) and 109 to 129 (IIDG…FVDL).

It is found in the membrane. This is an uncharacterized protein from Acanthamoeba polyphaga mimivirus (APMV).